The following is a 260-amino-acid chain: Dehydrin ERD10 (260 aa).

Disordered regions lie at residues 1 to 187, 197 to 216, and 240 to 260; these read MAEE…EEEK, KLPG…TTPL, and KLPG…KVSD. Ala2 carries the post-translational modification N-acetylalanine. Basic and acidic residues predominate over residues 26–44; the sequence is EIKERGMFDFLKKKEEVKP. Position 61 is a phosphoserine (Ser61). 5 stretches are compositionally biased toward basic and acidic residues: residues 67-102, 130-140, 148-162, 176-187, and 197-207; these read VAKH…DKLH, IVEGDHVKTVE, DRIK…KPGG, SVEDHKPEEEEK, and KLPGHSKKPED. 2 tandem repeats follow at residues 184-204 and 227-247. Residues 184–247 form a 2 X 21 AA repeats, Lys-rich region; that stretch reads EEEKKGFMDK…KEKLPGYHAK (64 aa).

It belongs to the plant dehydrin family. As to expression, in stems, cauline leaves, roots and flowers. Low levels found in maturing seeds. Absent in dry seeds.

This Arabidopsis thaliana (Mouse-ear cress) protein is Dehydrin ERD10 (ERD10).